The following is a 252-amino-acid chain: RNA-binding protein 7 (252 aa).

The region spanning Arg9–Gly86 is the RRM domain. 2 stretches are compositionally biased toward polar residues: residues Ser88–Asn107 and Gln119–Ser137. Disordered stretches follow at residues Ser88–Ser137 and Gln171–Phe252. 2 stretches are compositionally biased toward basic and acidic residues: residues Glu211–Gly230 and Pro237–Phe252.

As to quaternary structure, component of the nuclear exosome targeting (NEXT) complex composed of MTREX, ZCCHC8, and RBM7 that directs a subset of non-coding short-lived RNAs for exosomal degradation.

It localises to the nucleus. The protein resides in the nucleoplasm. Its function is as follows. RNA-binding subunit of the trimeric nuclear exosome targeting (NEXT) complex, a complex that functions as an RNA exosome cofactor that directs a subset of non-coding short-lived RNAs for exosomal degradation. NEXT is involved in surveillance and turnover of aberrant transcripts and non-coding RNAs. Binds preferentially polyuridine sequences and associates with newly synthesized RNAs, including pre-mRNAs and short-lived exosome substrates such as promoter upstream transcripts (PROMPTs), enhancer RNAs (eRNAs), and 3'-extended products from small nuclear RNAs (snRNAs). The chain is RNA-binding protein 7 from Danio rerio (Zebrafish).